The following is a 453-amino-acid chain: Bifunctional protein GlmU (453 aa).

The segment at 1 to 226 is pyrophosphorylase; it reads MKFSTVILAA…SIEVEGVNDR (226 aa). Residues 8 to 11, Lys-22, Gln-73, 78 to 79, 100 to 102, Gly-137, Glu-151, Asn-166, and Asn-224 contribute to the UDP-N-acetyl-alpha-D-glucosamine site; these read LAAG, GT, and YGD. Asp-102 is a Mg(2+) binding site. Asn-224 contributes to the Mg(2+) binding site. Residues 227–247 are linker; sequence IQLARLERAFQARQAKKLLEQ. The N-acetyltransferase stretch occupies residues 248-453; sequence GVMLRDPARF…AGWQRPAKKK (206 aa). 2 residues coordinate UDP-N-acetyl-alpha-D-glucosamine: Arg-330 and Lys-348. His-360 functions as the Proton acceptor in the catalytic mechanism. UDP-N-acetyl-alpha-D-glucosamine is bound by residues Tyr-363 and Asn-374. Residues Ala-377, 383–384, Ser-402, Ala-420, and Arg-437 contribute to the acetyl-CoA site; that span reads NY.

The protein in the N-terminal section; belongs to the N-acetylglucosamine-1-phosphate uridyltransferase family. This sequence in the C-terminal section; belongs to the transferase hexapeptide repeat family. In terms of assembly, homotrimer. Requires Mg(2+) as cofactor.

It localises to the cytoplasm. It catalyses the reaction alpha-D-glucosamine 1-phosphate + acetyl-CoA = N-acetyl-alpha-D-glucosamine 1-phosphate + CoA + H(+). The enzyme catalyses N-acetyl-alpha-D-glucosamine 1-phosphate + UTP + H(+) = UDP-N-acetyl-alpha-D-glucosamine + diphosphate. It functions in the pathway nucleotide-sugar biosynthesis; UDP-N-acetyl-alpha-D-glucosamine biosynthesis; N-acetyl-alpha-D-glucosamine 1-phosphate from alpha-D-glucosamine 6-phosphate (route II): step 2/2. The protein operates within nucleotide-sugar biosynthesis; UDP-N-acetyl-alpha-D-glucosamine biosynthesis; UDP-N-acetyl-alpha-D-glucosamine from N-acetyl-alpha-D-glucosamine 1-phosphate: step 1/1. It participates in bacterial outer membrane biogenesis; LPS lipid A biosynthesis. Catalyzes the last two sequential reactions in the de novo biosynthetic pathway for UDP-N-acetylglucosamine (UDP-GlcNAc). The C-terminal domain catalyzes the transfer of acetyl group from acetyl coenzyme A to glucosamine-1-phosphate (GlcN-1-P) to produce N-acetylglucosamine-1-phosphate (GlcNAc-1-P), which is converted into UDP-GlcNAc by the transfer of uridine 5-monophosphate (from uridine 5-triphosphate), a reaction catalyzed by the N-terminal domain. This Vibrio cholerae serotype O1 (strain ATCC 39541 / Classical Ogawa 395 / O395) protein is Bifunctional protein GlmU.